The primary structure comprises 1272 residues: Magnesium-chelatase subunit H (1272 aa).

This sequence belongs to the Mg-chelatase subunit H family.

It carries out the reaction protoporphyrin IX + Mg(2+) + ATP + H2O = Mg-protoporphyrin IX + ADP + phosphate + 3 H(+). It participates in porphyrin-containing compound metabolism; bacteriochlorophyll biosynthesis (light-independent). Functionally, involved in bacteriochlorophyll pigment biosynthesis; introduces a magnesium ion into protoporphyrin IX to yield Mg-protoroporphyrin IX. The chain is Magnesium-chelatase subunit H (bchH) from Chlorobaculum parvum (strain DSM 263 / NCIMB 8327) (Chlorobium vibrioforme subsp. thiosulfatophilum).